Consider the following 476-residue polypeptide: Argininosuccinate lyase (476 aa).

It belongs to the lyase 1 family. Argininosuccinate lyase subfamily.

The protein resides in the cytoplasm. It catalyses the reaction 2-(N(omega)-L-arginino)succinate = fumarate + L-arginine. It participates in amino-acid biosynthesis; L-arginine biosynthesis; L-arginine from L-ornithine and carbamoyl phosphate: step 3/3. This is Argininosuccinate lyase from Gluconacetobacter diazotrophicus (strain ATCC 49037 / DSM 5601 / CCUG 37298 / CIP 103539 / LMG 7603 / PAl5).